The primary structure comprises 368 residues: Peptide chain release factor 2 (368 aa).

Position 251 is an N5-methylglutamine (Gln251).

Belongs to the prokaryotic/mitochondrial release factor family. In terms of processing, methylated by PrmC. Methylation increases the termination efficiency of RF2.

The protein resides in the cytoplasm. In terms of biological role, peptide chain release factor 2 directs the termination of translation in response to the peptide chain termination codons UGA and UAA. The polypeptide is Peptide chain release factor 2 (Wolinella succinogenes (strain ATCC 29543 / DSM 1740 / CCUG 13145 / JCM 31913 / LMG 7466 / NCTC 11488 / FDC 602W) (Vibrio succinogenes)).